A 132-amino-acid polypeptide reads, in one-letter code: Interferon-induced transmembrane protein 5 (132 aa).

The span at M1 to R11 shows a compositional bias: basic and acidic residues. Residues M1–H21 form a disordered region. The Extracellular segment spans residues M1–H36. The helical transmembrane segment at L37 to L57 threads the bilayer. 3 S-palmitoyl cysteine lipidation sites follow: C50, C51, and C84. Topologically, residues A58–N86 are cytoplasmic. Residues I87–G107 form a helical membrane-spanning segment. Topologically, residues A108 to D132 are extracellular.

It belongs to the CD225/Dispanin family. As to quaternary structure, interacts with FKBP11. Palmitoylated. Detected in osteoblasts and fibroblasts (at protein level). Detected in bone.

Its subcellular location is the cell membrane. Functionally, required for normal bone mineralization. The chain is Interferon-induced transmembrane protein 5 (IFITM5) from Homo sapiens (Human).